Consider the following 523-residue polypeptide: Putative F-box protein At1g30925 (523 aa).

An F-box domain is found at 4-44 (FPNDDLVYEILLRLPAKSVARCSCVSKLRRSILSRQDFTEL).

The protein is Putative F-box protein At1g30925 of Arabidopsis thaliana (Mouse-ear cress).